Reading from the N-terminus, the 351-residue chain is Glycerol-3-phosphate dehydrogenase [NAD(P)+] (351 aa).

Serine 12, tryptophan 13, histidine 33, and lysine 114 together coordinate NADPH. Sn-glycerol 3-phosphate-binding residues include lysine 114, glycine 145, and serine 147. NADPH is bound at residue alanine 149. Residues lysine 200, aspartate 253, serine 263, arginine 264, and asparagine 265 each contribute to the sn-glycerol 3-phosphate site. Residue lysine 200 is the Proton acceptor of the active site. Residue arginine 264 coordinates NADPH. Positions 288 and 290 each coordinate NADPH.

This sequence belongs to the NAD-dependent glycerol-3-phosphate dehydrogenase family.

The protein localises to the cytoplasm. It carries out the reaction sn-glycerol 3-phosphate + NAD(+) = dihydroxyacetone phosphate + NADH + H(+). It catalyses the reaction sn-glycerol 3-phosphate + NADP(+) = dihydroxyacetone phosphate + NADPH + H(+). The protein operates within membrane lipid metabolism; glycerophospholipid metabolism. Catalyzes the reduction of the glycolytic intermediate dihydroxyacetone phosphate (DHAP) to sn-glycerol 3-phosphate (G3P), the key precursor for phospholipid synthesis. In Lacticaseibacillus casei (strain BL23) (Lactobacillus casei), this protein is Glycerol-3-phosphate dehydrogenase [NAD(P)+].